A 142-amino-acid polypeptide reads, in one-letter code: Ornithine decarboxylase antizyme (142 aa).

Over residues 1-19 (MSSSIVLSNNNSNSNSMSM) the composition is skewed to low complexity. Residues 1–34 (MSSSIVLSNNNSNSNSMSMIGQSPPCCSDVPNTP) form a disordered region.

Belongs to the ODC antizyme family. As to quaternary structure, interacts with ODC1 and thereby sterically blocks ODC homodimerization.

In terms of biological role, ornithine decarboxylase (ODC) antizyme protein that negatively regulates ODC activity and intracellular polyamine biosynthesis and uptake in response to increased intracellular polyamine levels. Binds to ODC monomers, inhibiting the assembly of the functional ODC homodimer, and targets the monomers for ubiquitin-independent proteolytic destruction by the 26S proteasome. This Pristionchus pacificus (Parasitic nematode) protein is Ornithine decarboxylase antizyme.